The chain runs to 120 residues: Methylglyoxal synthase (120 aa).

One can recognise an MGS-like domain in the interval 1–120 (MRIALIAHDN…TAEILVESVL (120 aa)). Substrate is bound by residues H8, K12, and 54-55 (SG). D60 (proton donor/acceptor) is an active-site residue. H87 is a binding site for substrate.

Belongs to the methylglyoxal synthase family.

The enzyme catalyses dihydroxyacetone phosphate = methylglyoxal + phosphate. In terms of biological role, catalyzes the formation of methylglyoxal from dihydroxyacetone phosphate. The chain is Methylglyoxal synthase from Natranaerobius thermophilus (strain ATCC BAA-1301 / DSM 18059 / JW/NM-WN-LF).